We begin with the raw amino-acid sequence, 239 residues long: Uridylate kinase (239 aa).

An ATP-binding site is contributed by 13–16; it reads KVSG. Gly-55 is a UMP binding site. Gly-56 and Arg-60 together coordinate ATP. Residues Asp-75 and 136-143 contribute to the UMP site; that span reads TGNPFFTT. Residues Thr-163, Gln-164, Tyr-169, and Asp-172 each coordinate ATP.

Belongs to the UMP kinase family. As to quaternary structure, homohexamer.

It is found in the cytoplasm. The enzyme catalyses UMP + ATP = UDP + ADP. It participates in pyrimidine metabolism; CTP biosynthesis via de novo pathway; UDP from UMP (UMPK route): step 1/1. Inhibited by UTP. Its function is as follows. Catalyzes the reversible phosphorylation of UMP to UDP. In Bartonella henselae (strain ATCC 49882 / DSM 28221 / CCUG 30454 / Houston 1) (Rochalimaea henselae), this protein is Uridylate kinase.